Reading from the N-terminus, the 257-residue chain is ATP synthase delta chain, chloroplastic (257 aa).

Residues 1 to 70 constitute a chloroplast transit peptide; sequence MAALQNPVAL…PRGGALGTRM (70 aa).

Belongs to the ATPase delta chain family. In terms of assembly, F-type ATPases have 2 components, CF(1) - the catalytic core - and CF(0) - the membrane proton channel. CF(1) has five subunits: alpha(3), beta(3), gamma(1), delta(1), epsilon(1). CF(0) has three main subunits: a, b and c.

The protein localises to the plastid. It localises to the chloroplast thylakoid membrane. This protein seems to be part of the stalk that links CF(0) to CF(1). It either transmits conformational changes from CF(0) into CF(1) or is implicated in proton conduction. In Spinacia oleracea (Spinach), this protein is ATP synthase delta chain, chloroplastic (ATPD).